We begin with the raw amino-acid sequence, 159 residues long: Carbohydrate sulfotransferase 15 (159 aa).

At 1–159 the chain is on the lumenal side; the sequence is SGTTDFYRRI…YQPHNERLVK (159 aa). 2 N-linked (GlcNAc...) asparagine glycosylation sites follow: Asn-42 and Asn-112.

It belongs to the sulfotransferase 1 family. Requires a divalent metal cation as cofactor. It depends on glutathione as a cofactor.

The protein resides in the golgi apparatus membrane. The enzyme catalyses dermatan 4'-sulfate + n 3'-phosphoadenylyl sulfate = dermatan 4',6'-bissulfate + n adenosine 3',5'-bisphosphate + n H(+). The catalysed reaction is chondroitin 4'-sulfate + n 3'-phosphoadenylyl sulfate = chondroitin 4',6'-bissulfate + n adenosine 3',5'-bisphosphate + n H(+). In terms of biological role, sulfotransferase that transfers sulfate from 3'-phosphoadenosine 5'-phosphosulfate (PAPS) to the C-6 hydroxyl group of the GalNAc 4-sulfate residue of chondroitin sulfate A and forms chondroitin sulfate E containing GlcA-GalNAc(4,6-SO(4)) repeating units. This Nototodarus sloanii (Wellington flying squid) protein is Carbohydrate sulfotransferase 15 (GALNAC4S6ST).